A 208-amino-acid chain; its full sequence is High frequency lysogenization protein HflD homolog (208 aa).

Belongs to the HflD family.

Its subcellular location is the cytoplasm. It is found in the cell inner membrane. The protein is High frequency lysogenization protein HflD homolog of Yersinia pestis bv. Antiqua (strain Nepal516).